We begin with the raw amino-acid sequence, 199 residues long: Carbon disulfide hydrolase (199 aa).

Zn(2+) is bound by residues cysteine 36, histidine 91, and cysteine 94.

Belongs to the beta-class carbonic anhydrase family. Exists as both octamers and hexadecamers in solution. The hexadecameric homooligomer may form a catenane, through interactions of two interlocked octameric rings. The cofactor is Zn(2+).

It carries out the reaction carbon disulfide + 2 H2O = 2 hydrogen sulfide + CO2 + 2 H(+). It functions in the pathway sulfur metabolism; hydrogen sulfide biosynthesis. Functionally, catalyzes the conversion of carbon disulfide into hydrogen sulfide and carbon dioxide, with carbonyl sulfide as an intermediate. Likely plays a key role in sulfur metabolism that allows A.thiooxidans G8 to grow on carbon disulfide as the main carbon and energy source. Does not show carbonic anhydrase activity (hydration of CO(2) to carbonate). The protein is Carbon disulfide hydrolase of Acidithiobacillus thiooxidans (Thiobacillus thiooxidans).